Here is a 250-residue protein sequence, read N- to C-terminus: 5-oxoprolinase subunit A (250 aa).

The protein belongs to the LamB/PxpA family. Forms a complex composed of PxpA, PxpB and PxpC.

It catalyses the reaction 5-oxo-L-proline + ATP + 2 H2O = L-glutamate + ADP + phosphate + H(+). Catalyzes the cleavage of 5-oxoproline to form L-glutamate coupled to the hydrolysis of ATP to ADP and inorganic phosphate. In Staphylococcus aureus (strain MW2), this protein is 5-oxoprolinase subunit A.